A 175-amino-acid polypeptide reads, in one-letter code: Cytochrome c-550-like protein (175 aa).

The first 34 residues, 1–34 (MYQPHFWQRSIGWLCGGLLILLLGWTIAPATALA), serve as a signal peptide directing secretion. The heme c site is built by C81, C84, H85, and C135.

This sequence belongs to the cytochrome c family. PsbV subfamily. Requires heme c as cofactor.

It localises to the cellular thylakoid membrane. In terms of biological role, probable low-potential cytochrome c, can partially replace cytochrome c-550 (PsbV) function. The protein is Cytochrome c-550-like protein of Thermosynechococcus vestitus (strain NIES-2133 / IAM M-273 / BP-1).